The primary structure comprises 823 residues: Ciliated left-right organizer ZP-N domains-containing protein (823 aa).

Positions 1–22 (MWGSPALAWAVWLACVQPTVFP) are cleaved as a signal peptide. Disordered regions lie at residues 206–242 (MGLYVDMNATTVTVQSPRQGLLQRWEVLNTSAELLPL), 269–422 (LVHI…DLLH), 434–520 (GPFL…SPSP), and 632–656 (LPREGARGHMDLSSSEPSQDIEGPG). Over residues 216–230 (TVTVQSPRQGLLQRW) the composition is skewed to pro residues. Over residues 389-402 (GPETPPAGVPPAAS) the composition is skewed to low complexity.

It is found in the secreted. In terms of biological role, plays a role in left-right patterning process. The sequence is that of Ciliated left-right organizer ZP-N domains-containing protein from Homo sapiens (Human).